We begin with the raw amino-acid sequence, 206 residues long: uncharacterized protein (206 aa).

Positions 14–200 constitute a YrdC-like domain; that stretch reads QRLINQAVEI…TPVVVREGVG (187 aa).

It belongs to the SUA5 family.

This is an uncharacterized protein from Escherichia coli O6:H1 (strain CFT073 / ATCC 700928 / UPEC).